The chain runs to 684 residues: Divalent metal transporter 1 (684 aa).

The Cytoplasmic segment spans residues 1–228 (MEKDFTERST…YRNKLSLYNK (228 aa)). The segment at 153–195 (NKRNNNNNNNNNNNNNNNNNNNNNNNNNNNNNNNNSNNVDNRK) is disordered. Residues 156-191 (NNNNNNNNNNNNNNNNNNNNNNNNNNNNNNNNSNNV) show a composition bias toward low complexity. Residues 229 to 247 (LRMCFNYFGPGWIVAIAYL) traverse the membrane as a helical segment. At 248–275 (DPGNLCSNLNVGLIRSPDPTLEKDYSGY) the chain is on the vacuolar side. The helical transmembrane segment at 276-299 (YLLWIMVYGHMLGFIFQVLSMRLG) threads the bilayer. The Cytoplasmic segment spans residues 300–319 (HVTGLDLASLCSKEFDRTTS). Residues 320–345 (TIIYVLVQIAIWGAHIQAIIGTFIAL) traverse the membrane as a helical segment. Topologically, residues 346 to 350 (NLIFG) are vacuolar. A helical transmembrane segment spans residues 351–370 (ISVKVAIFYTLFEAIIYSFL). At 371–381 (ENKSLGLLENV) the chain is on the cytoplasmic side. The chain crosses the membrane as a helical span at residues 382–404 (LSFLVGILAVSFFVNVFMTPINF). Over 405–423 (KELAISILYPRIPKGKEID) the chain is Vacuolar. Residues 424-445 (ALALLGSIISAHIFYLHTNLTA) form a helical membrane-spanning segment. The Cytoplasmic segment spans residues 446 to 465 (KKKSVICNDLSLRRYNTLGT). Residues 466-487 (IESGGSLFLSCLTNCIIVLTFA) traverse the membrane as a helical segment. The Vacuolar segment spans residues 488–515 (EVNLKSFERRDQYNLFTAYEVMRKSFGK). Residues 516–534 (ISMYIWSFGLLSSGNNSSF) form a helical membrane-spanning segment. The Cytoplasmic segment spans residues 535 to 554 (MCEYASKSVVEGFLNKKINT). Residues 555–573 (FVRVFTFRLMLFSLLYMFL) form a helical membrane-spanning segment. Topologically, residues 574 to 584 (TLNKYTLDQLT) are vacuolar. Residues 585-603 (NFINVIQVLLLPMATIPLY) form a helical membrane-spanning segment. Topologically, residues 604–622 (RFSIHENVLGEFRLKKFPK) are cytoplasmic. Residues 623–645 (FAVFLIIIAIIISNVLLTFLDFV) form a helical membrane-spanning segment. The Vacuolar portion of the chain corresponds to 646-650 (HKETS). Residues 651 to 673 (LITIFFLVIFSFLYFGFIIYFFN) form a helical membrane-spanning segment. At 674-684 (IPIKKNYIQRN) the chain is on the cytoplasmic side.

This sequence belongs to the NRAMP (TC 2.A.55) family.

The protein localises to the vacuole membrane. The catalysed reaction is Fe(2+)(in) = Fe(2+)(out). Functionally, iron transporter. Required for parasite development during the blood stages. Required for apicoplast biogenesis. Required for mitochondrial polarization. This chain is Divalent metal transporter 1, found in Plasmodium falciparum (isolate 3D7).